Consider the following 468-residue polypeptide: UDP-N-acetylmuramate--L-alanine ligase (468 aa).

112–118 (GTHGKTT) provides a ligand contact to ATP.

The protein belongs to the MurCDEF family.

Its subcellular location is the cytoplasm. It carries out the reaction UDP-N-acetyl-alpha-D-muramate + L-alanine + ATP = UDP-N-acetyl-alpha-D-muramoyl-L-alanine + ADP + phosphate + H(+). It participates in cell wall biogenesis; peptidoglycan biosynthesis. Its function is as follows. Cell wall formation. This is UDP-N-acetylmuramate--L-alanine ligase from Bordetella avium (strain 197N).